The sequence spans 135 residues: Small ribosomal subunit protein uS12 (135 aa).

The disordered stretch occupies residues 1 to 20 (MPTINQLVRKGRHSKVTKSK). Basic residues predominate over residues 9–18 (RKGRHSKVTK).

Belongs to the universal ribosomal protein uS12 family. As to quaternary structure, part of the 30S ribosomal subunit. Contacts proteins S8 and S17. May interact with IF1 in the 30S initiation complex.

Its function is as follows. With S4 and S5 plays an important role in translational accuracy. Interacts with and stabilizes bases of the 16S rRNA that are involved in tRNA selection in the A site and with the mRNA backbone. Located at the interface of the 30S and 50S subunits, it traverses the body of the 30S subunit contacting proteins on the other side and probably holding the rRNA structure together. The combined cluster of proteins S8, S12 and S17 appears to hold together the shoulder and platform of the 30S subunit. The chain is Small ribosomal subunit protein uS12 from Lactobacillus acidophilus (strain ATCC 700396 / NCK56 / N2 / NCFM).